Consider the following 316-residue polypeptide: UDP-N-acetylenolpyruvoylglucosamine reductase (316 aa).

The FAD-binding PCMH-type domain maps to 30 to 194 (VGGEADYLVF…LSVKFALAPG (165 aa)). Residue Arg-173 is part of the active site. Ser-223 serves as the catalytic Proton donor. The active site involves Glu-293.

This sequence belongs to the MurB family. Requires FAD as cofactor.

Its subcellular location is the cytoplasm. It carries out the reaction UDP-N-acetyl-alpha-D-muramate + NADP(+) = UDP-N-acetyl-3-O-(1-carboxyvinyl)-alpha-D-glucosamine + NADPH + H(+). It functions in the pathway cell wall biogenesis; peptidoglycan biosynthesis. Cell wall formation. This chain is UDP-N-acetylenolpyruvoylglucosamine reductase, found in Streptococcus pneumoniae serotype 19F (strain G54).